A 358-amino-acid chain; its full sequence is MSTAIRSGRQSNWEAFCQWVTDTNNRIYVGWFGVLMIPCLLAATICFTIAFIAAPPVDIDGIREPVAGSLIYGNNIISGAVVPSSNAIGLHFYPIWEAASLDEWLYNGGPYQLVCFHFLIGISAYMGRQWELSYRLGMRPWICVAYSAPLSAAMAVFLVYPFGQGSFSDGMPLGISGTFNFMLVFQAEHNILMHPFHMLGVAGVFGGSLFSAMHGSLVTSSLVRETTETESQNYGYKFGQEEETYNIVAAHGYFGRLIFQYASFNNSRSLHFFLGAWPVVGIWFTSMGVSTMAFNLNGFNFNQSILDGQGRVVNTWADMVNRAGLGMEVMHERNAHNFPLDLATVESTPVALQAPAIG.

3 helical membrane-spanning segments follow: residues 28-45 (YVGW…AATI), 117-132 (HFLI…QWEL), and 141-155 (WICV…AAMA). Position 117 (His117) interacts with chlorophyll a. Tyr125 contributes to the pheophytin a binding site. Asp169 and Glu188 together coordinate [CaMn4O5] cluster. Residues 196-217 (FHMLGVAGVFGGSLFSAMHGSL) traverse the membrane as a helical segment. His197 contacts chlorophyll a. Residues His214 and 263-264 (SF) each bind a quinone. His214 is a Fe cation binding site. His271 contacts Fe cation. A helical transmembrane segment spans residues 273–287 (FLGAWPVVGIWFTSM). Residues His331, Glu332, Asp341, and Ala343 each contribute to the [CaMn4O5] cluster site. Positions 344–358 (TVESTPVALQAPAIG) are excised as a propeptide.

It belongs to the reaction center PufL/M/PsbA/D family. PSII is composed of 1 copy each of membrane proteins PsbA, PsbB, PsbC, PsbD, PsbE, PsbF, PsbH, PsbI, PsbJ, PsbK, PsbL, PsbM, PsbT, PsbX, PsbY, PsbZ, Psb30/Ycf12, peripheral proteins PsbO, CyanoQ (PsbQ), PsbU, PsbV and a large number of cofactors. It forms dimeric complexes. The D1/D2 heterodimer binds P680, chlorophylls that are the primary electron donor of PSII, and subsequent electron acceptors. It shares a non-heme iron and each subunit binds pheophytin, quinone, additional chlorophylls, carotenoids and lipids. D1 provides most of the ligands for the Mn4-Ca-O5 cluster of the oxygen-evolving complex (OEC). There is also a Cl(-1) ion associated with D1 and D2, which is required for oxygen evolution. The PSII complex binds additional chlorophylls, carotenoids and specific lipids. serves as cofactor. Tyr-160 forms a radical intermediate that is referred to as redox-active TyrZ, YZ or Y-Z. Post-translationally, C-terminally processed by CtpA; processing is essential to allow assembly of the oxygen-evolving complex and thus photosynthetic growth.

It is found in the cellular thylakoid membrane. The enzyme catalyses 2 a plastoquinone + 4 hnu + 2 H2O = 2 a plastoquinol + O2. In terms of biological role, photosystem II (PSII) is a light-driven water:plastoquinone oxidoreductase that uses light energy to abstract electrons from H(2)O, generating O(2) and a proton gradient subsequently used for ATP formation. It consists of a core antenna complex that captures photons, and an electron transfer chain that converts photonic excitation into a charge separation. The D1/D2 (PsbA/PsbD) reaction center heterodimer binds P680, the primary electron donor of PSII as well as several subsequent electron acceptors. In Parasynechococcus marenigrum (strain WH8102), this protein is Photosystem II protein D1 2.